The following is a 168-amino-acid chain: Desumoylating isopeptidase 1 (168 aa).

Residues tyrosine 7 to aspartate 149 form the PPPDE domain. Histidine 38 is an active-site residue. The Nuclear export signal 1 signature appears at isoleucine 83–leucine 91. Cysteine 108 is an active-site residue. A Nuclear export signal 2 motif is present at residues proline 139 to isoleucine 153.

It belongs to the DeSI family. In terms of assembly, homodimer. Interacts with UBQLN4; leading to the export of UBQLN4 from the nucleus.

It localises to the cytoplasm. The protein localises to the nucleus. The enzyme catalyses S-hexadecanoyl-L-cysteinyl-[protein] + H2O = L-cysteinyl-[protein] + hexadecanoate + H(+). In terms of biological role, protease which deconjugates SUMO1, SUMO2 and SUMO3 from some substrate proteins. Has isopeptidase but not SUMO-processing activity. Desumoylates ZBTB46. Collaborates with UBQLN4 in the export of ubiquitinated proteins from the nucleus to the cytoplasm. Exhibits palmitoyl protein thioesterase (S-depalmitoylation) activity towards synthetic substrates 4-methylumbelliferyl-6-S-palmitoyl-beta-D-glucopyranoside and S-depalmitoylation probe 5 (DPP-5). In Rattus norvegicus (Rat), this protein is Desumoylating isopeptidase 1 (Desi1).